Consider the following 111-residue polypeptide: Large ribosomal subunit protein uL24 (111 aa).

It belongs to the universal ribosomal protein uL24 family. In terms of assembly, part of the 50S ribosomal subunit.

Functionally, one of two assembly initiator proteins, it binds directly to the 5'-end of the 23S rRNA, where it nucleates assembly of the 50S subunit. Its function is as follows. One of the proteins that surrounds the polypeptide exit tunnel on the outside of the subunit. This Chlamydia pneumoniae (Chlamydophila pneumoniae) protein is Large ribosomal subunit protein uL24.